Reading from the N-terminus, the 191-residue chain is Ribosomal RNA small subunit methyltransferase G (191 aa).

Residues Gly62, Phe67, 111 to 112 (IE), and Arg124 contribute to the S-adenosyl-L-methionine site.

The protein belongs to the methyltransferase superfamily. RNA methyltransferase RsmG family.

It localises to the cytoplasm. It catalyses the reaction guanosine(527) in 16S rRNA + S-adenosyl-L-methionine = N(7)-methylguanosine(527) in 16S rRNA + S-adenosyl-L-homocysteine. Functionally, specifically methylates the N7 position of guanine in position 527 of 16S rRNA. The sequence is that of Ribosomal RNA small subunit methyltransferase G from Rickettsia typhi (strain ATCC VR-144 / Wilmington).